The following is a 37-amino-acid chain: Large ribosomal subunit protein bL36 (37 aa).

The protein belongs to the bacterial ribosomal protein bL36 family.

In Aliarcobacter butzleri (strain RM4018) (Arcobacter butzleri), this protein is Large ribosomal subunit protein bL36.